A 282-amino-acid chain; its full sequence is Pantothenate synthetase (282 aa).

Residue 30 to 37 (MGYLHEGH) coordinates ATP. Residue His37 is the Proton donor of the active site. Position 61 (Gln61) interacts with (R)-pantoate. Gln61 is a binding site for beta-alanine. 147 to 150 (GMKD) serves as a coordination point for ATP. (R)-pantoate is bound at residue Gln153. ATP is bound by residues Val176 and 184–187 (KSSR).

This sequence belongs to the pantothenate synthetase family. In terms of assembly, homodimer.

It localises to the cytoplasm. The enzyme catalyses (R)-pantoate + beta-alanine + ATP = (R)-pantothenate + AMP + diphosphate + H(+). It functions in the pathway cofactor biosynthesis; (R)-pantothenate biosynthesis; (R)-pantothenate from (R)-pantoate and beta-alanine: step 1/1. Functionally, catalyzes the condensation of pantoate with beta-alanine in an ATP-dependent reaction via a pantoyl-adenylate intermediate. In Bacillus cereus (strain B4264), this protein is Pantothenate synthetase.